Reading from the N-terminus, the 566-residue chain is Arginine--tRNA ligase (566 aa).

The short motif at 121 to 131 (ANPNGPFHIGH) is the 'HIGH' region element.

The protein belongs to the class-I aminoacyl-tRNA synthetase family.

It localises to the cytoplasm. The catalysed reaction is tRNA(Arg) + L-arginine + ATP = L-arginyl-tRNA(Arg) + AMP + diphosphate. In Methanococcus maripaludis (strain DSM 14266 / JCM 13030 / NBRC 101832 / S2 / LL), this protein is Arginine--tRNA ligase.